The sequence spans 594 residues: Glutamate decarboxylase 1 (594 aa).

Over residues 1-13 (MASSTPSSSATSS) the composition is skewed to low complexity. Residues 1-22 (MASSTPSSSATSSNAGADPNTA) form a disordered region. Residue Ser78 is modified to Phosphoserine. 190–192 (QLS) lines the 4-aminobutanoate pocket. An N6-(pyridoxal phosphate)lysine modification is found at Lys405. Arg567 is a binding site for 4-aminobutanoate.

This sequence belongs to the group II decarboxylase family. Homodimer. The cofactor is pyridoxal 5'-phosphate.

It catalyses the reaction L-glutamate + H(+) = 4-aminobutanoate + CO2. Functionally, catalyzes the synthesis of the inhibitory neurotransmitter gamma-aminobutyric acid (GABA) with pyridoxal 5'-phosphate as cofactor. This chain is Glutamate decarboxylase 1 (GAD1), found in Canis lupus familiaris (Dog).